Consider the following 351-residue polypeptide: Protein RecA (351 aa).

An ATP-binding site is contributed by 67 to 74 (GPESSGKT).

The protein belongs to the RecA family.

It localises to the cytoplasm. Functionally, can catalyze the hydrolysis of ATP in the presence of single-stranded DNA, the ATP-dependent uptake of single-stranded DNA by duplex DNA, and the ATP-dependent hybridization of homologous single-stranded DNAs. It interacts with LexA causing its activation and leading to its autocatalytic cleavage. This Arthrobacter sp. (strain FB24) protein is Protein RecA.